Reading from the N-terminus, the 1901-residue chain is MATFRNNHMKTKASVRKSFSEDVFQSVKSLLQSQKELCSVTAEDCLQQDEHANLTEVTFLGFNEETDAAHIQDLAAVSLELPDILNSLHFCSLNENEIICMKNINKPLDISSDPLNQSHPSGMLCVMRVSPTSPRLRIDFIFSLLSKYATGIRYTLDTFLHQKHQLETTDEDDDDTNQSVSSIEDDFVTAFEHLEEEETSKPYNDGMNITVLRSQCDAASQTVTGHHLETHDLKILISSGQQKSLAKPSTSSVNVLGHKELPSVKTSVTTSISEPWTQRSFYRSSNASDKDSDLQKTFFSSSPAYSSESECSSPSPVIFLDEEGYQKSLKAKLELPKIPVMKDDIEDSDSEVSEFFDSFDQFDELEQTLETCLFNKDPVIGKSSQRKGHKHGKSCMNPQKFKFDRPALPANVRKPTPRKPESPYGNLCDAPDSPRPVKASREDSGLFSPIRSSAFSPLGGCTPAECFCQTDIGGDRIHENHDSVYYTYEDYAKSISCEVLGSVLRTHHTNTLSNINSIKHGENKTVTFKHGNLDQKNKSKNKSLMIKDSIQKFAADLVEKSFGSAFKDLQKGVSSCTNALYHLAIKLTSSVLQMAFDELRRQRAFSLKERAISGLANFLVSEALSNALKDLQYVKKQIFTNTVARFAADLAEELVFEGIMEVCQFSYPQTPASPQCGSFDFEDKVVKLYAKDLSESVIQEAFIELSQVDVTFTTKAAVSVSTDNIKYVSAESVVPSTQAVTFSPSFHNQAIMVTKPVQEYKKEYTVQQALFCTSGIVTSIPVPLAGSALLPYHISSTACQAKAHLSSDDSNSNGDSAQVHIATKNREEKAACLRNICLPSEHNPGNQNDFKPTNDDIEMQSSSKLPNDPAIISNFSAAVVHTIVNETLESMTSLEVTKMVDERTDYLTKSLKEKTPPFSHCDQAVLQCSEASSNKDMFADRLSKSIIKHSIDKSKSVIPNIDKNAVYKESLPVSGEESQLTPEKSPKFPDSQNQLTHCSLSAAKDCVPECKVSMVHGSSLETLPSCPAVTGQKSDLKESAKDQPLKKHNLNSTSLEALSFGQENPFPHSHTFSSTALTCVDGLHVEDKQKVRDRNVIPDTPPSTPLVPSRASSEWDIKKLTKKLKGELAKEFAPATPPSTPHNSSVGSLSENEQNTIEKEEFMLKLMRSLSEEVESSESGELPEVDVKSEHSGKKVQFAEALATHILSLATEMAASHLDNKIIQEPKVKNPCLNVQSQRSVSPTFLNPSDENLKTLCNFAGDLAAEVITEAEKIAKVRNCMLFKQKKNSCYADGDEDYKVEEKLDIEAVVHPREVDPFILSLPPSSCMSGLMYKYPSCESVTDEYAGHLIQILKQEGGNSELIMDQYANRLAYRSVKSGLQEAAKTTKVQCNSRMFPVPSSQVKTNKELLMFSNKEHHQEADKKRQSKRNEGYFCKNQTCERTLDPYRNEVSQLYSFSTSLVHSITKDAKEELTASLVGLPKSLTDSCLFEKSGYEEDNECHVTPELPKSLQPSSQNHRFYHSTGSLNGYGCGDNVVQAVEQYAKKVVDDTLELTLGSTVFRVSETTKSADRVTYAEKLSPLTGQACRYCDLKELHNCTGNSSQHFFRQGSLASSKPASNPKFSSRYQKSRIFHLSVPQIHVNLDKKAVLAEKIVAEAIEKAERELSSTSLAADSGIGQEGASFAESLATETMTAAVTNVGHAVSSSKEIEDFQSTESVSSQQMNLSIGDDSTGSWSNLSFEDEHQDESSSFHHLSESNGNSSSWSSLGLEGDLYEDNLSFPTSDSDGPDDKDEEHEDEVEGLGQDGKTLLITNIDMEPCTVDPQLRIILQWLIASEAEVAELYFHDSANKEFMLLSKQLQEKGWKVGDLLQAVLQYYEVMEKASSEERCKSLFDWLLENA.

Ser-18, Ser-422, Ser-433, Ser-444, and Ser-448 each carry phosphoserine. A disordered region spans residues Ala-407–Asp-443. Disordered stretches follow at residues Asn-843–Lys-864 and Leu-971–Asn-993. 2 positions are modified to phosphothreonine: Thr-981 and Thr-1100. Residues Glu-1131–Glu-1153 are disordered. Over residues Pro-1141–Glu-1153 the composition is skewed to polar residues. Phosphoserine occurs at positions 1171, 1176, 1177, 1242, and 1337. Position 1485 is a phosphothreonine (Thr-1485). At Ser-1580 the chain carries Phosphoserine. Residues Leu-1650 to Glu-1663 form a PKA-RII subunit binding domain region. The interval Lys-1708–Gln-1805 is disordered. Polar residues predominate over residues Phe-1713 to Ser-1740. The segment covering Asp-1747–Ser-1756 has biased composition (basic and acidic residues). Over residues Glu-1757–Gly-1772 the composition is skewed to low complexity. The segment covering Asp-1787–Glu-1801 has biased composition (acidic residues).

It belongs to the AKAP110 family. In terms of tissue distribution, expressed in heart, brain, lung, liver, kidney, testis and ovary. Weakly expressed in skeletal muscle, pancreas and spleen.

It is found in the cytoplasm. Its subcellular location is the cytoskeleton. It localises to the microtubule organizing center. The protein resides in the centrosome. Functionally, binds to type II regulatory subunits of protein kinase A and anchors/targets them. In Homo sapiens (Human), this protein is A-kinase anchor protein 11 (AKAP11).